Consider the following 597-residue polypeptide: Uptake hydrogenase large subunit (597 aa).

The Ni(2+) site is built by Cys-75, Cys-78, Cys-576, and Cys-579.

The protein belongs to the [NiFe]/[NiFeSe] hydrogenase large subunit family. In terms of assembly, heterodimer of a large and a small subunit. Requires Ni(2+) as cofactor.

It is found in the cell membrane. The enzyme catalyses H2 + A = AH2. In terms of biological role, this enzyme recycles the H(2) produced by nitrogenase to increase the production of ATP and to protect nitrogenase against inhibition or damage by O(2) under carbon- or phosphate-limited conditions. This chain is Uptake hydrogenase large subunit (hupB), found in Rhodobacter capsulatus (Rhodopseudomonas capsulata).